The chain runs to 164 residues: Peptidyl-prolyl cis-trans isomerase A (164 aa).

An N-acetylmethionine modification is found at Met1. Val2 carries the N-acetylvaline; in Peptidyl-prolyl cis-trans isomerase A, N-terminally processed modification. Positions 7–163 constitute a PPIase cyclophilin-type domain; sequence FFDIAVDGEP…KKITIADCGQ (157 aa). Lys28 carries the post-translational modification N6-acetyllysine; alternate. Lys28 participates in a covalent cross-link: Glycyl lysine isopeptide (Lys-Gly) (interchain with G-Cter in SUMO2); alternate. A Glycyl lysine isopeptide (Lys-Gly) (interchain with G-Cter in ubiquitin); alternate cross-link involves residue Lys28. N6-acetyllysine occurs at positions 44 and 76. An intrachain disulfide couples Cys62 to Cys161. Ser77 is subject to Phosphoserine. An N6-acetyllysine; alternate modification is found at Lys82. Lys82 participates in a covalent cross-link: Glycyl lysine isopeptide (Lys-Gly) (interchain with G-Cter in SUMO2); alternate. Residue Thr93 is modified to Phosphothreonine. Residue Asn108 is glycosylated (N-linked (GlcNAc...) asparagine). N6-acetyllysine is present on residues Lys125, Lys131, and Lys133.

It belongs to the cyclophilin-type PPIase family. PPIase A subfamily. In terms of assembly, interacts with protein phosphatase PPP3CA/calcineurin A. Interacts with isoform 2 of BSG/CD147. Interacts with FOXO1; the interaction promotes FOXO1 dephosphorylation, nuclear accumulation and transcriptional activity. Interacts with integrin ITGA2B:ITGB3; the interaction is ROS and peptidyl-prolyl cis-trans isomerase (PPIase) activity-dependent and is increased in the presence of thrombin. Interacts with MAP3K5. Interacts with TARDBP; the interaction is dependent on the RNA-binding activity of TARDBP and the PPIase activity of PPIA/CYPA and the acetylation of PPIA/CYPA at Lys-125 favors the interaction. Interacts with HNRNPA1, HNRNPA2B1, HNRNPC, RBMX, HNRNPK and HNRNPM. Acetylation at Lys-125 markedly inhibits catalysis of cis to trans isomerization. PPIA acetylation also antagonizes the immunosuppressive effects of cyclosporine by inhibiting the sequential steps of cyclosporine binding and calcineurin inhibition. Acetylation at Lys-125 favors the interaction with TARDBP.

The protein localises to the cytoplasm. The protein resides in the secreted. It is found in the nucleus. The catalysed reaction is [protein]-peptidylproline (omega=180) = [protein]-peptidylproline (omega=0). With respect to regulation, binds cyclosporin A (CsA). CsA mediates some of its effects via an inhibitory action on PPIase. Its function is as follows. Catalyzes the cis-trans isomerization of proline imidic peptide bonds in oligopeptides. Exerts a strong chemotactic effect on leukocytes partly through activation of one of its membrane receptors BSG/CD147, initiating a signaling cascade that culminates in MAPK/ERK activation. Activates endothelial cells (ECs) in a proinflammatory manner by stimulating activation of NF-kappa-B and ERK, JNK and p38 MAP-kinases and by inducing expression of adhesion molecules including SELE and VCAM1. Induces apoptosis in ECs by promoting the FOXO1-dependent expression of CCL2 and BCL2L11 which are involved in EC chemotaxis and apoptosis. In response to oxidative stress, initiates proapoptotic and antiapoptotic signaling in ECs via activation of NF-kappa-B and AKT1 and up-regulation of antiapoptotic protein BCL2. Negatively regulates MAP3K5/ASK1 kinase activity, autophosphorylation and oxidative stress-induced apoptosis mediated by MAP3K5/ASK1. Necessary for the assembly of TARDBP in heterogeneous nuclear ribonucleoprotein (hnRNP) complexes and regulates TARDBP binding to RNA UG repeats and TARDBP-dependent expression of HDAC6, ATG7 and VCP which are involved in clearance of protein aggregates. Plays an important role in platelet activation and aggregation. Regulates calcium mobilization and integrin ITGA2B:ITGB3 bidirectional signaling via increased ROS production as well as by facilitating the interaction between integrin and the cell cytoskeleton. Binds heparan sulfate glycosaminoglycans. This is Peptidyl-prolyl cis-trans isomerase A (PPIA) from Bos taurus (Bovine).